We begin with the raw amino-acid sequence, 786 residues long: Endonuclease MutS2 (786 aa).

An ATP-binding site is contributed by 332 to 339; sequence GPNTGGKT. The Smr domain maps to 711–786; the sequence is IDLRGMDSME…GTGVTVVELK (76 aa).

It belongs to the DNA mismatch repair MutS family. MutS2 subfamily. In terms of assembly, homodimer. Binds to stalled ribosomes, contacting rRNA.

Functionally, endonuclease that is involved in the suppression of homologous recombination and thus may have a key role in the control of bacterial genetic diversity. Acts as a ribosome collision sensor, splitting the ribosome into its 2 subunits. Detects stalled/collided 70S ribosomes which it binds and splits by an ATP-hydrolysis driven conformational change. Acts upstream of the ribosome quality control system (RQC), a ribosome-associated complex that mediates the extraction of incompletely synthesized nascent chains from stalled ribosomes and their subsequent degradation. Probably generates substrates for RQC. In Clostridium tetani (strain Massachusetts / E88), this protein is Endonuclease MutS2.